The primary structure comprises 500 residues: NAD(P)H-quinone oxidoreductase chain 4, chloroplastic (500 aa).

The next 15 membrane-spanning stretches (helical) occupy residues 4 to 24 (FYWL…IALL), 35 to 55 (YTIC…CYHF), 80 to 100 (LGID…TTLA), 113 to 130 (LFHF…GSFS), 134 to 154 (LLLF…LLSM), 167 to 187 (FILY…GMGL), 208 to 228 (ALEI…SPII), 242 to 262 (HYST…YGLV), 274 to 294 (SIFS…AALT), 305 to 325 (IAYS…SITD), 330 to 350 (GAIL…FLAG), 364 to 384 (MGGI…FSMA), 386 to 406 (LALP…GIIT), 416 to 436 (ILIT…SLSM), and 462 to 482 (IFIF…PDFV).

Belongs to the complex I subunit 4 family.

The protein localises to the plastid. Its subcellular location is the chloroplast thylakoid membrane. It carries out the reaction a plastoquinone + NADH + (n+1) H(+)(in) = a plastoquinol + NAD(+) + n H(+)(out). It catalyses the reaction a plastoquinone + NADPH + (n+1) H(+)(in) = a plastoquinol + NADP(+) + n H(+)(out). This is NAD(P)H-quinone oxidoreductase chain 4, chloroplastic from Nymphaea alba (White water-lily).